The chain runs to 356 residues: Sporulation minus regulator 1 (356 aa).

The DNA-binding element occupies 183–199 (HPLRQLPGNPWHKFFGN).

It to N.crassa mta-2.

Its subcellular location is the nucleus. Functionally, transcriptional activator that is required for post-fertilization events. It is required for the developmental events that occur in the female organ after fertilization. The chain is Sporulation minus regulator 1 (SMR1) from Podospora anserina (Pleurage anserina).